The primary structure comprises 569 residues: MNTEILGVALQILLLLVISYPLGKHIAKVYKEGNDCMRFMAPIERFIYKLAGINPNEEMDWKAFLKSLLIINVFWFFWGMILLVSQGYLPLNPDGNSGQSPDLAFNTCISFMVNCNLQHYSGESGLTYFTQLFVIMLFQFITAATGMAAMAGIMKSMAAKTTKTIGNFWHYLVISCTRILFPMSLIVGFILIIQGTPMGFDSKMTIPTLEGAEQTVSQGPTAAIVPIKQLGTNGGGYFGVNSSHPLENPTYLTNIVECWSILIIPMALVFALGFYLKRKKLGYVIYGVMLFAYLLGVFCNVHYEMAGNPKIDEMGIDQSCGAMEGKETRLGPGATALWSVTTTVTSNGSVNGMHDSTMPLSGMVEMLNMQINTWFGGVGVGFMNYYAFLIIAVFISGLMVGRTPEFLGKKVEAREMKIATIVSLAHPFVILIFTAISSYVWVYAPEFVESEGGWLNNPGFHGFSEMLYEYTSSSANNGSGFEGLGDNTYFWNYTCGLALIISRYLPIVGQVAIAGLLANKKYTPESAGTLKTDTVTFGVMTFFVIVIVAALSFFPAQTLGPIAEYFSIY.

The next 10 membrane-spanning stretches (helical) occupy residues 3 to 23, 64 to 84, 133 to 153, 179 to 199, 255 to 275, 281 to 301, 375 to 395, 421 to 441, 497 to 517, and 535 to 555; these read TEILGVALQILLLLVISYPLG, FLKSLLIINVFWFFWGMILLV, FVIMLFQFITAATGMAAMAGI, ILFPMSLIVGFILIIQGTPMG, IVECWSILIIPMALVFALGFY, LGYVIYGVMLFAYLLGVFCNV, FGGVGVGFMNYYAFLIIAVFI, IVSLAHPFVILIFTAISSYVW, LALIISRYLPIVGQVAIAGLL, and VTFGVMTFFVIVIVAALSFFP.

Belongs to the KdpA family. In terms of assembly, the system is composed of three essential subunits: KdpA, KdpB and KdpC.

It localises to the cell inner membrane. Part of the high-affinity ATP-driven potassium transport (or Kdp) system, which catalyzes the hydrolysis of ATP coupled with the electrogenic transport of potassium into the cytoplasm. This subunit binds the periplasmic potassium ions and delivers the ions to the membrane domain of KdpB through an intramembrane tunnel. The sequence is that of Potassium-transporting ATPase potassium-binding subunit from Parabacteroides distasonis (strain ATCC 8503 / DSM 20701 / CIP 104284 / JCM 5825 / NCTC 11152).